A 351-amino-acid polypeptide reads, in one-letter code: Palmitoyltransferase spe-10 (351 aa).

The next 4 helical transmembrane spans lie at 21–43 (TGWI…LWWS), 60–80 (IQAT…MWSL), 198–218 (YFLL…LTSL), and 241–261 (LFSF…LIIF). Residues 154–204 (KYCYECGHIKPDRARHCSSCGKCCIKYDHHCPWINMCVTHVNYKYFLLYII) form the DHHC domain.

It belongs to the DHHC palmitoyltransferase family. As to expression, expressed during spermatogenesis in budding and budded spermatids.

It localises to the membrane. It carries out the reaction L-cysteinyl-[protein] + hexadecanoyl-CoA = S-hexadecanoyl-L-cysteinyl-[protein] + CoA. In terms of biological role, involved in spermatogenesis, specifically in the morphogenesis of fibrous body-membranous organelles (FB-MO), which are Golgi-derived organelles used for transporting sperm-specific components, in spermatocytes and in their localization into budding spermatids. Required for the proper formation of spermatids and spermatozoa. The chain is Palmitoyltransferase spe-10 from Caenorhabditis elegans.